Here is a 512-residue protein sequence, read N- to C-terminus: Centrosomal protein CCDC61 (512 aa).

Methionine 1 bears the N-acetylmethionine mark. The head domain stretch occupies residues 1 to 142; that stretch reads MEQPAGLQVD…PLPLPYQGKP (142 aa). Coiled coils occupy residues 176-203 and 246-273; these read WHLREQVTRLASEKRELEAQLGRSREEA and RRLAKELEEVKASERNLRARLKTLNCEL. Threonine 282 is modified (phosphothreonine). Disordered stretches follow at residues 282-415 and 430-472; these read TLPA…SFRS and SQSV…HLAS. Residues 287–300 are compositionally biased toward basic and acidic residues; the sequence is AREDRALSSRERST. 4 positions are modified to phosphoserine: serine 328, serine 330, serine 372, and serine 375. Residues 406–415 are compositionally biased toward low complexity; that stretch reads RSSSVDSFRS. A phosphoserine mark is found at serine 447 and serine 473.

It belongs to the CCDC61 family. As to quaternary structure, forms homodimers (via head domain). Interacts with CEP170. Interacts with PCM1 and CEP131. Binds tubulin.

The protein resides in the cytoplasm. It is found in the cytoskeleton. The protein localises to the microtubule organizing center. It localises to the centrosome. Its subcellular location is the centriolar satellite. The protein resides in the cilium basal body. Its function is as follows. Microtubule-binding centrosomal protein required for centriole cohesion, independently of the centrosome-associated protein/CEP250 and rootletin/CROCC linker. In interphase, required for anchoring microtubule at the mother centriole subdistal appendages and for centrosome positioning. During mitosis, may be involved in spindle assembly and chromatin alignment by regulating the organization of spindle microtubules into a symmetrical structure. Plays a non-essential role in ciliogenesis. This Rattus norvegicus (Rat) protein is Centrosomal protein CCDC61.